Here is a 214-residue protein sequence, read N- to C-terminus: Large ribosomal subunit protein bL25 (214 aa).

A disordered region spans residues 193–214 (PRAAAEEEDTGAEGDVEAADAE). Over residues 198–214 (EEEDTGAEGDVEAADAE) the composition is skewed to acidic residues.

It belongs to the bacterial ribosomal protein bL25 family. CTC subfamily. As to quaternary structure, part of the 50S ribosomal subunit; part of the 5S rRNA/L5/L18/L25 subcomplex. Contacts the 5S rRNA. Binds to the 5S rRNA independently of L5 and L18.

In terms of biological role, this is one of the proteins that binds to the 5S RNA in the ribosome where it forms part of the central protuberance. This is Large ribosomal subunit protein bL25 from Nitrosococcus oceani (strain ATCC 19707 / BCRC 17464 / JCM 30415 / NCIMB 11848 / C-107).